The sequence spans 126 residues: Holo-[acyl-carrier-protein] synthase (126 aa).

2 residues coordinate Mg(2+): aspartate 9 and glutamate 58.

It belongs to the P-Pant transferase superfamily. AcpS family. Mg(2+) is required as a cofactor.

It is found in the cytoplasm. The catalysed reaction is apo-[ACP] + CoA = holo-[ACP] + adenosine 3',5'-bisphosphate + H(+). Its function is as follows. Transfers the 4'-phosphopantetheine moiety from coenzyme A to a Ser of acyl-carrier-protein. The polypeptide is Holo-[acyl-carrier-protein] synthase (Vibrio atlanticus (strain LGP32) (Vibrio splendidus (strain Mel32))).